The primary structure comprises 928 residues: Inner tegument protein (928 aa).

An interaction with large tegument protein region spans residues 482–928 (WGGAVPANLA…LAGLRKLFVE (447 aa)).

It belongs to the herpesviridae inner tegument protein family. In terms of assembly, interacts (via C-terminus) with the large tegument protein/LTP (via N-terminus).

The protein localises to the virion tegument. It localises to the host cytoplasm. The protein resides in the host nucleus. It is found in the host Golgi apparatus. Its subcellular location is the host trans-Golgi network. Plays an essential role in cytoplasmic secondary envelopment during viral egress. Interacts with the capsid via the large tegument protein/LTP and participates in its transport to the host trans-Golgi network (TGN) where secondary envelopment occurs. Modulates tegumentation and capsid accumulation at the viral assembly complex. In Homo sapiens (Human), this protein is Inner tegument protein (ORF63).